A 255-amino-acid polypeptide reads, in one-letter code: tRNA pseudouridine synthase A (255 aa).

The Nucleophile role is filled by D43. Y94 contributes to the substrate binding site.

It belongs to the tRNA pseudouridine synthase TruA family.

The catalysed reaction is uridine(38/39/40) in tRNA = pseudouridine(38/39/40) in tRNA. Its function is as follows. Formation of pseudouridine at positions 38, 39 and 40 in the anticodon stem and loop of transfer RNAs. The chain is tRNA pseudouridine synthase A from Pyrobaculum islandicum (strain DSM 4184 / JCM 9189 / GEO3).